Reading from the N-terminus, the 359-residue chain is 1-deoxy-D-xylulose 5-phosphate reductoisomerase (359 aa).

The NADPH site is built by threonine 12, glycine 13, serine 14, isoleucine 15, lysine 38, and asparagine 39. Lysine 105 provides a ligand contact to 1-deoxy-D-xylulose 5-phosphate. Position 106 (glutamate 106) interacts with NADPH. Aspartate 130 lines the Mn(2+) pocket. Positions 131, 132, 152, and 175 each coordinate 1-deoxy-D-xylulose 5-phosphate. Glutamate 132 lines the Mn(2+) pocket. Glycine 181 lines the NADPH pocket. 1-deoxy-D-xylulose 5-phosphate contacts are provided by serine 188, asparagine 193, lysine 194, and glutamate 197. Residue glutamate 197 coordinates Mn(2+).

It belongs to the DXR family. It depends on Mg(2+) as a cofactor. The cofactor is Mn(2+).

The enzyme catalyses 2-C-methyl-D-erythritol 4-phosphate + NADP(+) = 1-deoxy-D-xylulose 5-phosphate + NADPH + H(+). The protein operates within isoprenoid biosynthesis; isopentenyl diphosphate biosynthesis via DXP pathway; isopentenyl diphosphate from 1-deoxy-D-xylulose 5-phosphate: step 1/6. Catalyzes the NADPH-dependent rearrangement and reduction of 1-deoxy-D-xylulose-5-phosphate (DXP) to 2-C-methyl-D-erythritol 4-phosphate (MEP). The polypeptide is 1-deoxy-D-xylulose 5-phosphate reductoisomerase (Pseudothermotoga lettingae (strain ATCC BAA-301 / DSM 14385 / NBRC 107922 / TMO) (Thermotoga lettingae)).